Consider the following 646-residue polypeptide: MKTRRGKRPERFWPSIVMNKWLNRKPKVYDFSEDEIDTEPESEDDVCSVKDVPNVHCVTDEDSHNGRRGSEADHGNNISDGGVSVRGGYQRKHRRGKSETLRAQYINTKDIKVTVATWNVAGKRPSDDLEIEDWLSTDNPSDIYIIGFQEVVPLNAGNVFGAEDRGPIPKWESIIRRTLNKSNKESVYDQSPSCNNNALHRSHSAPSSPILAQEANSIISHVMVENLVADHSLDLATNEFIDAATALPSLEPQRNPNMDWPELALDSNPQIVGSEGKLRRVFSSNATLGFKLPENPSGASRFASEARQLKRSRSFETLNLSWNDIKEEIDNRSSSSSEAEEAAKIMHDDSSDGDSSSQDEEDGDKIRNSYGLPEDLVEECRKVKDSQKYVRIVSKQMVGIYVSVWIRRRLRRHVNNLKVSPVGVGLMGYMGNKGSVSISMTLYQSRMCFVCSHLTSGHKDGAEQRRNADVYEIIRRTRFASVLDTDQPRTIPCHDQVFWFGDLNYRLNMSDGEVRKLVSQKRWDELKNSDQLIRELRRGHVFDGWREGPIKFPPTYKYEFDSDRYAGENLREPEKKRAPAWCDRILWLGKGIRQECYKRSEIRMSDHRPVTSIFNVGVEVFDHRKLQRALHVNNAAASAVHPEPSF.

Positions 59–74 (TDEDSHNGRRGSEADH) are enriched in basic and acidic residues. Disordered regions lie at residues 59 to 99 (TDED…GKSE), 185 to 207 (ESVY…SAPS), and 329 to 369 (IDNR…IRNS). The segment covering 188–207 (YDQSPSCNNNALHRSHSAPS) has biased composition (polar residues). The segment covering 341 to 350 (EAAKIMHDDS) has biased composition (basic and acidic residues). Catalytic stretches follow at residues 495 to 510 (DQVF…LNMS) and 575 to 590 (KKRA…WLGK).

The protein belongs to the inositol polyphosphate 5-phosphatase family. As to expression, expressed ubiquitously.

It catalyses the reaction 1D-myo-inositol 1,4,5-trisphosphate + H2O = 1D-myo-inositol 1,4-bisphosphate + phosphate. It carries out the reaction 1D-myo-inositol 1,3,4,5-tetrakisphosphate + H2O = 1D-myo-inositol 1,3,4-trisphosphate + phosphate. Its function is as follows. Has phosphatase activity toward Ins(1,4,5)P3 and Ins(1,3,4,5)P4. Seems to be involved in the abscisic acid (ABA) signaling pathway. Could also be able to hydrolyze PtdIns(4,5)P2 and PtdIns(3,4,5)P3. The polypeptide is Type I inositol polyphosphate 5-phosphatase 2 (Arabidopsis thaliana (Mouse-ear cress)).